The chain runs to 160 residues: MAPK regulated corepressor interacting protein 2 (160 aa).

N-acetylmethionine is present on Met-1. Residues Met-1–Pro-64 form a disordered region. Arg-35 bears the Omega-N-methylarginine mark. A compositionally biased stretch (pro residues) spans Pro-37–Ser-61. Phosphoserine is present on Ser-61. An Omega-N-methylarginine modification is found at Arg-65. Ser-82 bears the Phosphoserine mark.

This sequence belongs to the MCRIP family. As to quaternary structure, interacts with DDX6. Interacts with MCRIP1.

It localises to the cytoplasm. It is found in the stress granule. The protein localises to the nucleus. The polypeptide is MAPK regulated corepressor interacting protein 2 (MCRIP2) (Homo sapiens (Human)).